We begin with the raw amino-acid sequence, 553 residues long: Cytochrome P450 86A2 (553 aa).

A helical transmembrane segment spans residues 2–20 (DVSNTMLLVAVVAAYWLWF). Heme is bound at residue Cys459.

The protein belongs to the cytochrome P450 family. Requires heme as cofactor. In terms of tissue distribution, expressed in leaves, stems, flowers and siliques. Expressed at low levels in roots. Expressed in guard cells of cotyledons and leaves.

It localises to the membrane. The enzyme catalyses an organic molecule + reduced [NADPH--hemoprotein reductase] + O2 = an alcohol + oxidized [NADPH--hemoprotein reductase] + H2O + H(+). Its function is as follows. Catalyzes the omega-hydroxylation of various fatty acids (FA). Acts on saturated and unsaturated fatty acids with chain lengths from C12 to C18. Plays a major role in the biosynthesis of extracellular lipids. Involved in the biosynthesis of hydroxylated fatty acids required for cutin biosynthesis, cuticle development and repression of bacterial type III gene expression. The chain is Cytochrome P450 86A2 (CYP86A2) from Arabidopsis thaliana (Mouse-ear cress).